The primary structure comprises 230 residues: Cytidylate kinase (230 aa).

Residue 12–20 (GPSGAGKGT) coordinates ATP.

This sequence belongs to the cytidylate kinase family. Type 1 subfamily.

Its subcellular location is the cytoplasm. The catalysed reaction is CMP + ATP = CDP + ADP. It catalyses the reaction dCMP + ATP = dCDP + ADP. The chain is Cytidylate kinase from Aeromonas hydrophila subsp. hydrophila (strain ATCC 7966 / DSM 30187 / BCRC 13018 / CCUG 14551 / JCM 1027 / KCTC 2358 / NCIMB 9240 / NCTC 8049).